Here is a 143-residue protein sequence, read N- to C-terminus: Large ribosomal subunit protein uL11 (143 aa).

The protein belongs to the universal ribosomal protein uL11 family. Part of the ribosomal stalk of the 50S ribosomal subunit. Interacts with L10 and the large rRNA to form the base of the stalk. L10 forms an elongated spine to which L12 dimers bind in a sequential fashion forming a multimeric L10(L12)X complex. One or more lysine residues are methylated.

Forms part of the ribosomal stalk which helps the ribosome interact with GTP-bound translation factors. The protein is Large ribosomal subunit protein uL11 of Sphingopyxis alaskensis (strain DSM 13593 / LMG 18877 / RB2256) (Sphingomonas alaskensis).